Reading from the N-terminus, the 345-residue chain is Methylthioribose-1-phosphate isomerase (345 aa).

Substrate-binding positions include 44–46, arginine 86, and glutamine 194; that span reads RGA. Aspartate 235 functions as the Proton donor in the catalytic mechanism. 245–246 contributes to the substrate binding site; sequence NK.

It belongs to the eIF-2B alpha/beta/delta subunits family. MtnA subfamily.

It carries out the reaction 5-(methylsulfanyl)-alpha-D-ribose 1-phosphate = 5-(methylsulfanyl)-D-ribulose 1-phosphate. It participates in amino-acid biosynthesis; L-methionine biosynthesis via salvage pathway; L-methionine from S-methyl-5-thio-alpha-D-ribose 1-phosphate: step 1/6. Functionally, catalyzes the interconversion of methylthioribose-1-phosphate (MTR-1-P) into methylthioribulose-1-phosphate (MTRu-1-P). The polypeptide is Methylthioribose-1-phosphate isomerase (Desulfitobacterium hafniense (strain Y51)).